The sequence spans 243 residues: MSATDRYSHQLLYATVRQRLLDDIAQGVYQAGQQIPTENELCTQYNVSRITIRKAISDLVADGVLIRWQGKGTFVQSQKVENALLTVSGFTDFGVSQGKSTKEKVIEQERVSAAPFCEKLNIPGNSEVFHLCRVMYLDKEPLFIDSSWIPLSRYPDFDEIYVEGSSTYQLFQERFDTRVVSDKKTIDIFAATRPQAKWLKCELGEPLFRISKIAFDQNDKPVHVSELFCRANRITLTIDNKRH.

The region spanning 10–78 (QLLYATVRQR…QGKGTFVQSQ (69 aa)) is the HTH gntR-type domain. A DNA-binding region (H-T-H motif) is located at residues 38–57 (ENELCTQYNVSRITIRKAIS).

Its pathway is carbohydrate metabolism; fructoselysine degradation [regulation]. In terms of biological role, may regulate the transcription of the frlABCDR operon, involved in the utilization of fructoselysine and psicoselysine. The protein is Probable fructoselysine utilization operon transcriptional repressor (frlR) of Shigella flexneri.